A 430-amino-acid chain; its full sequence is Enolase (430 aa).

Gln165 is a binding site for (2R)-2-phosphoglycerate. The Proton donor role is filled by Glu207. Residues Asp244, Glu287, and Asp314 each contribute to the Mg(2+) site. Positions 339, 368, 369, and 390 each coordinate (2R)-2-phosphoglycerate. The active-site Proton acceptor is Lys339.

Belongs to the enolase family. As to quaternary structure, component of the RNA degradosome, a multiprotein complex involved in RNA processing and mRNA degradation. Mg(2+) serves as cofactor.

It localises to the cytoplasm. The protein resides in the secreted. It is found in the cell surface. The enzyme catalyses (2R)-2-phosphoglycerate = phosphoenolpyruvate + H2O. It functions in the pathway carbohydrate degradation; glycolysis; pyruvate from D-glyceraldehyde 3-phosphate: step 4/5. Catalyzes the reversible conversion of 2-phosphoglycerate (2-PG) into phosphoenolpyruvate (PEP). It is essential for the degradation of carbohydrates via glycolysis. This Xylella fastidiosa (strain 9a5c) protein is Enolase.